The primary structure comprises 345 residues: MSNAITMGILWHLIGAASAACFYAPFKKVRHWSWETMWSVGGVVSWLILPWVVSALLLPDFWAYYRSFSAATLLPVFLFGAMWGIGNINYGLTMRYLGMSMGIGIAIGITLIVGTLMTPLLNGKFGVLVGTAGGRMTLLGVFVALVGVAIVTRAGQLKERQMGIKAEEFNLKKGLVLAVLCGVFSAGMSFAMDAAKPMHEAAAALGVDPLYVALPSYVVIMGGGALINLGFCFIRLAKVKNLSIKADFSLAKPLLISNVLLSALGGLMWYLQFFFYAWGHARIPAQYDYISWMLHMSFYVLCGGIVGLLLREWKTAGRRPVSVLSLGCVVIIVAANIVGLGMATN.

A run of 10 helical transmembrane segments spans residues 4 to 24, 38 to 58, 68 to 88, 101 to 121, 131 to 151, 175 to 195, 214 to 234, 259 to 279, 290 to 310, and 323 to 343; these read AITM…CFYA, WSVG…ALLL, FSAA…IGNI, MGIG…TPLL, TAGG…VAIV, LVLA…MDAA, LPSY…FCFI, VLLS…YAWG, ISWM…GLLL, and VLSL…LGMA.

The protein belongs to the L-rhamnose transporter (TC 2.A.7.6) family.

It localises to the cell inner membrane. It carries out the reaction L-rhamnopyranose(in) + H(+)(in) = L-rhamnopyranose(out) + H(+)(out). Uptake of L-rhamnose across the cytoplasmic membrane with the concomitant transport of protons into the cell (symport system). This is L-rhamnose-proton symporter from Cronobacter sakazakii (strain ATCC BAA-894) (Enterobacter sakazakii).